Here is a 178-residue protein sequence, read N- to C-terminus: Interleukin-10 (178 aa).

An N-terminal signal peptide occupies residues 1-18 (MHSSALLCCLVLLTGVRA). Disulfide bonds link cysteine 30–cysteine 126 and cysteine 80–cysteine 132. An N-linked (GlcNAc...) asparagine glycan is attached at asparagine 134.

Belongs to the IL-10 family. As to quaternary structure, homodimer. Interacts with IL10RA and IL10RB.

It is found in the secreted. In terms of biological role, major immune regulatory cytokine that acts on many cells of the immune system where it has profound anti-inflammatory functions, limiting excessive tissue disruption caused by inflammation. Mechanistically, IL10 binds to its heterotetrameric receptor comprising IL10RA and IL10RB leading to JAK1 and STAT2-mediated phosphorylation of STAT3. In turn, STAT3 translocates to the nucleus where it drives expression of anti-inflammatory mediators. Targets antigen-presenting cells (APCs) such as macrophages and monocytes and inhibits their release of pro-inflammatory cytokines including granulocyte-macrophage colony-stimulating factor /GM-CSF, granulocyte colony-stimulating factor/G-CSF, IL-1 alpha, IL-1 beta, IL-6, IL-8 and TNF-alpha. Also interferes with antigen presentation by reducing the expression of MHC-class II and co-stimulatory molecules, thereby inhibiting their ability to induce T cell activation. In addition, controls the inflammatory response of macrophages by reprogramming essential metabolic pathways including mTOR signaling. The protein is Interleukin-10 (IL10) of Cercocebus atys (Sooty mangabey).